We begin with the raw amino-acid sequence, 345 residues long: Anthranilate phosphoribosyltransferase (345 aa).

5-phospho-alpha-D-ribose 1-diphosphate is bound by residues Gly-84, 87 to 88 (GD), Thr-92, 94 to 97 (NIST), 112 to 120 (KHGGRGVSS), and Ser-124. Gly-84 contacts anthranilate. Ser-96 contacts Mg(2+). Arg-170 contacts anthranilate. Mg(2+) contacts are provided by Asp-229 and Glu-230.

This sequence belongs to the anthranilate phosphoribosyltransferase family. In terms of assembly, homodimer. Mg(2+) is required as a cofactor.

It catalyses the reaction N-(5-phospho-beta-D-ribosyl)anthranilate + diphosphate = 5-phospho-alpha-D-ribose 1-diphosphate + anthranilate. It functions in the pathway amino-acid biosynthesis; L-tryptophan biosynthesis; L-tryptophan from chorismate: step 2/5. Its function is as follows. Catalyzes the transfer of the phosphoribosyl group of 5-phosphorylribose-1-pyrophosphate (PRPP) to anthranilate to yield N-(5'-phosphoribosyl)-anthranilate (PRA). The polypeptide is Anthranilate phosphoribosyltransferase (Paracidovorax citrulli (strain AAC00-1) (Acidovorax citrulli)).